Consider the following 148-residue polypeptide: F-box protein At3g55900 (148 aa).

One can recognise an F-box domain in the interval 9–59 (CRNLSELPQELLYKILGLLPTRNVVSTSLISHQRRSQFHWMERLKFRYPRL).

This chain is F-box protein At3g55900, found in Arabidopsis thaliana (Mouse-ear cress).